The sequence spans 481 residues: Aspartyl/glutamyl-tRNA(Asn/Gln) amidotransferase subunit B (481 aa).

This sequence belongs to the GatB/GatE family. GatB subfamily. As to quaternary structure, heterotrimer of A, B and C subunits.

The catalysed reaction is L-glutamyl-tRNA(Gln) + L-glutamine + ATP + H2O = L-glutaminyl-tRNA(Gln) + L-glutamate + ADP + phosphate + H(+). It catalyses the reaction L-aspartyl-tRNA(Asn) + L-glutamine + ATP + H2O = L-asparaginyl-tRNA(Asn) + L-glutamate + ADP + phosphate + 2 H(+). Allows the formation of correctly charged Asn-tRNA(Asn) or Gln-tRNA(Gln) through the transamidation of misacylated Asp-tRNA(Asn) or Glu-tRNA(Gln) in organisms which lack either or both of asparaginyl-tRNA or glutaminyl-tRNA synthetases. The reaction takes place in the presence of glutamine and ATP through an activated phospho-Asp-tRNA(Asn) or phospho-Glu-tRNA(Gln). This is Aspartyl/glutamyl-tRNA(Asn/Gln) amidotransferase subunit B from Carboxydothermus hydrogenoformans (strain ATCC BAA-161 / DSM 6008 / Z-2901).